A 105-amino-acid chain; its full sequence is ATP-dependent Clp protease adapter protein ClpS (105 aa).

Positions 1–27 are disordered; the sequence is MVVMSAPTEPKSRPGTTGQRESAPEDV.

This sequence belongs to the ClpS family. As to quaternary structure, binds to the N-terminal domain of the chaperone ClpA.

Functionally, involved in the modulation of the specificity of the ClpAP-mediated ATP-dependent protein degradation. This chain is ATP-dependent Clp protease adapter protein ClpS, found in Mycolicibacterium paratuberculosis (strain ATCC BAA-968 / K-10) (Mycobacterium paratuberculosis).